We begin with the raw amino-acid sequence, 407 residues long: Indoleamine 2,3-dioxygenase 1 (407 aa).

H350 provides a ligand contact to heme b. The segment at 362 to 388 is disordered; it reads SKQKPMGGHKSEEPSNTENRGTGGTDV.

This sequence belongs to the indoleamine 2,3-dioxygenase family. Monomer. The cofactor is heme b.

It is found in the cytoplasm. The protein localises to the cytosol. It carries out the reaction D-tryptophan + O2 = N-formyl-D-kynurenine. The catalysed reaction is L-tryptophan + O2 = N-formyl-L-kynurenine. With respect to regulation, activity is inhibited by and MTH-trp (methylthiohydantoin-DL-tryptophan), modestly inhibited by L-1MT (1-methyl-L-tryptophan) but not D-1MT (1-methyl-D-tryptophan). In terms of biological role, catalyzes the first and rate limiting step of the catabolism of the essential amino acid tryptophan along the kynurenine pathway. Involved in the peripheral immune tolerance, contributing to maintain homeostasis by preventing autoimmunity or immunopathology that would result from uncontrolled and overreacting immune responses. Tryptophan shortage inhibits T lymphocytes division and accumulation of tryptophan catabolites induces T-cell apoptosis and differentiation of regulatory T-cells. Acts as a suppressor of anti-tumor immunity. Limits the growth of intracellular pathogens by depriving tryptophan. Protects the fetus from maternal immune rejection. The sequence is that of Indoleamine 2,3-dioxygenase 1 from Rattus norvegicus (Rat).